The primary structure comprises 94 residues: Pyrimidine/purine nucleoside phosphorylase (94 aa).

The protein belongs to the nucleoside phosphorylase PpnP family.

The enzyme catalyses a purine D-ribonucleoside + phosphate = a purine nucleobase + alpha-D-ribose 1-phosphate. It carries out the reaction adenosine + phosphate = alpha-D-ribose 1-phosphate + adenine. The catalysed reaction is cytidine + phosphate = cytosine + alpha-D-ribose 1-phosphate. It catalyses the reaction guanosine + phosphate = alpha-D-ribose 1-phosphate + guanine. The enzyme catalyses inosine + phosphate = alpha-D-ribose 1-phosphate + hypoxanthine. It carries out the reaction thymidine + phosphate = 2-deoxy-alpha-D-ribose 1-phosphate + thymine. The catalysed reaction is uridine + phosphate = alpha-D-ribose 1-phosphate + uracil. It catalyses the reaction xanthosine + phosphate = alpha-D-ribose 1-phosphate + xanthine. Its function is as follows. Catalyzes the phosphorolysis of diverse nucleosides, yielding D-ribose 1-phosphate and the respective free bases. Can use uridine, adenosine, guanosine, cytidine, thymidine, inosine and xanthosine as substrates. Also catalyzes the reverse reactions. The sequence is that of Pyrimidine/purine nucleoside phosphorylase from Salmonella newport (strain SL254).